The following is a 154-amino-acid chain: UPF0178 protein GM21_2006 (154 aa).

The protein belongs to the UPF0178 family.

This is UPF0178 protein GM21_2006 from Geobacter sp. (strain M21).